A 176-amino-acid polypeptide reads, in one-letter code: N-alpha-acetyltransferase 30 (176 aa).

The N-acetyltransferase domain occupies 3-159 (IVYKPLDIRN…DAFKLILPLT (157 aa)).

This sequence belongs to the acetyltransferase family. MAK3 subfamily. As to quaternary structure, component of the N-terminal acetyltransferase C (NatC) complex, which is composed of MAK3, MAK10 and MAK31.

It is found in the cytoplasm. The protein localises to the nucleus. The enzyme catalyses N-terminal L-methionyl-L-leucyl-[protein] + acetyl-CoA = N-terminal N(alpha)-acetyl-L-methionyl-L-leucyl-[protein] + CoA + H(+). It carries out the reaction N-terminal L-methionyl-L-isoleucyl-[protein] + acetyl-CoA = N-terminal N(alpha)-acetyl-L-methionyl-L-isoleucyl-[protein] + CoA + H(+). The catalysed reaction is N-terminal L-methionyl-L-phenylalanyl-[protein] + acetyl-CoA = N-terminal N(alpha)-acetyl-L-methionyl-L-phenylalanyl-[protein] + CoA + H(+). It catalyses the reaction N-terminal L-methionyl-L-tryptophyl-[protein] + acetyl-CoA = N-terminal N(alpha)-acetyl-L-methionyl-L-tryptophyl-[protein] + CoA + H(+). The enzyme catalyses N-terminal L-methionyl-L-tyrosyl-[protein] + acetyl-CoA = N-terminal N(alpha)-acetyl-L-methionyl-L-tyrosyl-[protein] + CoA + H(+). Catalytic component of the NatC N-terminal acetyltransferase, which catalyzes acetylation of the N-terminus Met of L-A virus GAG protein and possibly GRH1. The sequence is that of N-alpha-acetyltransferase 30 (MAK3) from Saccharomyces cerevisiae (strain ATCC 204508 / S288c) (Baker's yeast).